Here is a 215-residue protein sequence, read N- to C-terminus: Outer membrane protein assembly factor BamC homolog (215 aa).

A signal peptide spans 1 to 16 (MKKIILNLVTAIILAG). The N-palmitoyl cysteine moiety is linked to residue Cys17. The S-diacylglycerol cysteine moiety is linked to residue Cys17.

It belongs to the BamC family.

The protein resides in the cell outer membrane. This Haemophilus influenzae (strain ATCC 51907 / DSM 11121 / KW20 / Rd) protein is Outer membrane protein assembly factor BamC homolog.